Reading from the N-terminus, the 203-residue chain is MILITSGAEAEIYESENMIIKRRVKKNYRIDELDSMLNKTRTKREVNIIKKLNALNIPSPMFYTTNKYDIVMEKIKGIPVKNILNNESLTSNQFLNKICAKTHKDILIEIGNIVYAMHNNNIIHGDLTTLNFIYSDKIHIIDFGLSFYSNKDEDKAVDLYLFEKSLISVHNEEFVSYFYSGYIVNETLNKKLLEIRKRGRKRE.

In terms of domain architecture, Protein kinase spans 1–203 (MILITSGAEA…EIRKRGRKRE (203 aa)). ATP is bound by residues 4–12 (ITSGAEAEI) and K26. D126 serves as the catalytic Proton acceptor.

This sequence belongs to the protein kinase superfamily. BUD32 family. Component of the EKC/KEOPS complex composed of at least BUD32, CGI121, GON7, KAE1 and PCC1; the whole complex dimerizes.

The protein localises to the cytoplasm. It localises to the nucleus. It is found in the chromosome. Its subcellular location is the telomere. The catalysed reaction is L-seryl-[protein] + ATP = O-phospho-L-seryl-[protein] + ADP + H(+). It carries out the reaction L-threonyl-[protein] + ATP = O-phospho-L-threonyl-[protein] + ADP + H(+). Functionally, component of the EKC/KEOPS complex that is required for the formation of a threonylcarbamoyl group on adenosine at position 37 (t(6)A37) in tRNAs that read codons beginning with adenine. The complex is probably involved in the transfer of the threonylcarbamoyl moiety of threonylcarbamoyl-AMP (TC-AMP) to the N6 group of A37. BUD32 has ATPase activity in the context of the EKC/KEOPS complex and likely plays a supporting role to the catalytic subunit KAE1. The EKC/KEOPS complex also promotes both telomere uncapping and telomere elongation. The complex is required for efficient recruitment of transcriptional coactivators. The chain is EKC/KEOPS complex subunit BUD32 (BUD32) from Enterocytozoon bieneusi (strain H348) (Microsporidian parasite).